A 241-amino-acid polypeptide reads, in one-letter code: MSSMEGKKVPQVTFRTRQGDKWVDVTTSELFDNKTVIVFSLPGAFTPTCSSSHLPRYNELAPVFKKYGVDDILVVSVNDTFVMNAWKEDEKSENISFIPDGNGEFTEGMGMLVGKEDLGFGKRSWRYSMLVKNGVVEKMFIEPNEPGDPFKVSDADTMLKYLAPQHQVQESISIFTKPGCPFCAKAKQLLHDKGLSFEEIILGHDATIVSVRAVSGRTTVPQVFIGGKHIGGSDDLEKYFA.

In terms of domain architecture, Thioredoxin spans 3–167 (SMEGKKVPQV…MLKYLAPQHQ (165 aa)). The active-site Cysteine sulfenic acid (-SOH) intermediate; for peroxiredoxin activity is the Cys-49. The Glutaredoxin domain maps to 170-241 (ESISIFTKPG…GSDDLEKYFA (72 aa)). A disulfide bridge links Cys-180 with Cys-183.

This sequence in the N-terminal section; belongs to the peroxiredoxin family. Prx5 subfamily. It in the C-terminal section; belongs to the glutaredoxin family. Homotetramer; interconnecting Prx and Grx domains of different monomers.

It carries out the reaction a hydroperoxide + 2 glutathione = an alcohol + glutathione disulfide + H2O. Thiol-specific peroxidase that catalyzes the reduction of hydrogen peroxide and organic hydroperoxides to water and alcohols, respectively. Plays a role in cell protection against oxidative stress by detoxifying peroxides. The polypeptide is Hybrid peroxiredoxin hyPrx5 (PGdx) (Haemophilus influenzae (strain ATCC 51907 / DSM 11121 / KW20 / Rd)).